The following is a 70-amino-acid chain: NADH dehydrogenase [ubiquinone] 1 alpha subcomplex subunit 1 (70 aa).

A helical transmembrane segment spans residues 1 to 21 (MWFEILPGLAIMGVCLVIPGV).

Belongs to the complex I NDUFA1 subunit family. Complex I is composed of 45 different subunits.

It is found in the mitochondrion inner membrane. Accessory subunit of the mitochondrial membrane respiratory chain NADH dehydrogenase (Complex I), that is believed not to be involved in catalysis. Complex I functions in the transfer of electrons from NADH to the respiratory chain. The immediate electron acceptor for the enzyme is believed to be ubiquinone. The polypeptide is NADH dehydrogenase [ubiquinone] 1 alpha subcomplex subunit 1 (Ndufa1) (Mus musculus (Mouse)).